Here is a 114-residue protein sequence, read N- to C-terminus: Large ribosomal subunit protein uL22 (114 aa).

It belongs to the universal ribosomal protein uL22 family. In terms of assembly, part of the 50S ribosomal subunit.

Functionally, this protein binds specifically to 23S rRNA; its binding is stimulated by other ribosomal proteins, e.g. L4, L17, and L20. It is important during the early stages of 50S assembly. It makes multiple contacts with different domains of the 23S rRNA in the assembled 50S subunit and ribosome. In terms of biological role, the globular domain of the protein is located near the polypeptide exit tunnel on the outside of the subunit, while an extended beta-hairpin is found that lines the wall of the exit tunnel in the center of the 70S ribosome. The polypeptide is Large ribosomal subunit protein uL22 (Lysinibacillus sphaericus (strain C3-41)).